An 875-amino-acid chain; its full sequence is Alanine--tRNA ligase (875 aa).

Zn(2+)-binding residues include H563, H567, C665, and H669.

This sequence belongs to the class-II aminoacyl-tRNA synthetase family. Zn(2+) is required as a cofactor.

It localises to the cytoplasm. It carries out the reaction tRNA(Ala) + L-alanine + ATP = L-alanyl-tRNA(Ala) + AMP + diphosphate. Its function is as follows. Catalyzes the attachment of alanine to tRNA(Ala) in a two-step reaction: alanine is first activated by ATP to form Ala-AMP and then transferred to the acceptor end of tRNA(Ala). Also edits incorrectly charged Ser-tRNA(Ala) and Gly-tRNA(Ala) via its editing domain. The chain is Alanine--tRNA ligase from Shewanella pealeana (strain ATCC 700345 / ANG-SQ1).